The chain runs to 108 residues: uncharacterized protein (108 aa).

Disulfide bonds link Cys44–Cys82, Cys60–Cys78, and Cys63–Cys91.

This sequence belongs to the arthropod CHH/MIH/GIH/VIH hormone family.

This is an uncharacterized protein from Caenorhabditis elegans.